A 971-amino-acid polypeptide reads, in one-letter code: Polyamine-modulated factor 1-binding protein 1 (971 aa).

Coiled-coil stretches lie at residues 37-69 (NKQY…LQAS), 117-229 (EKLH…ACSN), 282-325 (LHVE…LREE), 355-680 (QKLS…SAIQ), 706-827 (QDDL…DEKE), and 879-916 (IAKL…KAGT).

Expressed in testis and more specifically in ODF, the sperm tail specific cytoskeletal structure. Also expressed in epididymides and brain.

Its subcellular location is the cell projection. The protein localises to the cilium. It localises to the flagellum. Its function is as follows. Required for normal spermatogenesis. It functions as a scaffold protein that attaches the sperm head-tail connecting piece to the nuclear envelope, thus maintaining sperm head and tail integrity. May also be involved in the general organization of cellular cytoskeleton. The chain is Polyamine-modulated factor 1-binding protein 1 (Pmfbp1) from Rattus norvegicus (Rat).